A 305-amino-acid chain; its full sequence is UDP-3-O-acyl-N-acetylglucosamine deacetylase (305 aa).

Positions 78, 237, and 241 each coordinate Zn(2+). The active-site Proton donor is histidine 264.

Belongs to the LpxC family. Zn(2+) serves as cofactor.

It carries out the reaction a UDP-3-O-[(3R)-3-hydroxyacyl]-N-acetyl-alpha-D-glucosamine + H2O = a UDP-3-O-[(3R)-3-hydroxyacyl]-alpha-D-glucosamine + acetate. The protein operates within glycolipid biosynthesis; lipid IV(A) biosynthesis; lipid IV(A) from (3R)-3-hydroxytetradecanoyl-[acyl-carrier-protein] and UDP-N-acetyl-alpha-D-glucosamine: step 2/6. In terms of biological role, catalyzes the hydrolysis of UDP-3-O-myristoyl-N-acetylglucosamine to form UDP-3-O-myristoylglucosamine and acetate, the committed step in lipid A biosynthesis. In Burkholderia ambifaria (strain ATCC BAA-244 / DSM 16087 / CCUG 44356 / LMG 19182 / AMMD) (Burkholderia cepacia (strain AMMD)), this protein is UDP-3-O-acyl-N-acetylglucosamine deacetylase.